The primary structure comprises 382 residues: Alanine racemase 1 (382 aa).

Catalysis depends on Lys39, which acts as the Proton acceptor; specific for D-alanine. Residue Lys39 is modified to N6-(pyridoxal phosphate)lysine. Arg138 is a substrate binding site. The active-site Proton acceptor; specific for L-alanine is the Tyr265. Met312 is a binding site for substrate.

Belongs to the alanine racemase family. Requires pyridoxal 5'-phosphate as cofactor.

The catalysed reaction is L-alanine = D-alanine. It functions in the pathway amino-acid biosynthesis; D-alanine biosynthesis; D-alanine from L-alanine: step 1/1. In terms of biological role, catalyzes the interconversion of L-alanine and D-alanine. May also act on other amino acids. The sequence is that of Alanine racemase 1 (alr1) from Staphylococcus aureus (strain MRSA252).